A 177-amino-acid chain; its full sequence is Putative membrane protein 165 (177 aa).

Topologically, residues 1-7 (MYLVLLI) are intravirion. Residues 8–24 (AVILFIIVILMIFLISG) form a helical membrane-spanning segment. The Virion surface segment spans residues 25–166 (LFYPEQEPAL…DPHPALKSKN (142 aa)).

Belongs to the asfivirus envelope protein p22 family.

The protein localises to the virion membrane. It is found in the host cell membrane. This is Putative membrane protein 165 from African swine fever virus (isolate Pig/Kenya/KEN-50/1950) (ASFV).